The following is a 381-amino-acid chain: 4-hydroxyphenylpyruvate dioxygenase (381 aa).

VOC domains follow at residues 22–156 and 184–338; these read GMDA…LVER and AVDH…IFTK. Residues H187, H270, and E349 each coordinate Fe cation.

The protein belongs to the 4HPPD family. Homodimer. Requires Fe cation as cofactor.

It carries out the reaction 3-(4-hydroxyphenyl)pyruvate + O2 = homogentisate + CO2. It participates in amino-acid degradation; L-phenylalanine degradation; acetoacetate and fumarate from L-phenylalanine: step 3/6. The sequence is that of 4-hydroxyphenylpyruvate dioxygenase (hpd) from Streptomyces coelicolor (strain ATCC BAA-471 / A3(2) / M145).